The following is a 485-amino-acid chain: NADH-quinone oxidoreductase subunit N (485 aa).

Helical transmembrane passes span 8-28 (LIAL…MLSI), 35-55 (FLNA…LWFV), 71-91 (GFAM…CTFA), 105-125 (FYLL…ANHL), 127-147 (ALFL…GYAF), 159-179 (YTIL…LVYA), 203-223 (LLAG…LVPF), 235-255 (PAPV…GVVM), 271-291 (VVLG…ALSQ), 297-317 (LLGY…IVLQ), 326-346 (VGVY…VVSL), 373-393 (AAVM…LGFI), 408-430 (WWLV…RVAV), and 455-475 (IVVL…QPLI).

This sequence belongs to the complex I subunit 2 family. As to quaternary structure, NDH-1 is composed of 13 different subunits. Subunits NuoA, H, J, K, L, M, N constitute the membrane sector of the complex.

The protein localises to the cell inner membrane. It catalyses the reaction a quinone + NADH + 5 H(+)(in) = a quinol + NAD(+) + 4 H(+)(out). NDH-1 shuttles electrons from NADH, via FMN and iron-sulfur (Fe-S) centers, to quinones in the respiratory chain. The immediate electron acceptor for the enzyme in this species is believed to be ubiquinone. Couples the redox reaction to proton translocation (for every two electrons transferred, four hydrogen ions are translocated across the cytoplasmic membrane), and thus conserves the redox energy in a proton gradient. This is NADH-quinone oxidoreductase subunit N from Salmonella choleraesuis (strain SC-B67).